The sequence spans 574 residues: MDADSINSFFLIGALLTAVSVLLSPMSSRLGIPILLIFLAVGILAGEDGPGGILFDDYSTAYLVSNFALAIILLDGGMRTRVASFRVALWPALSLATFGVAITTSITGVMAAWLFDLHWLQGLLVGAIVGSTDAAAVFSLLKGRSLNERVGATLEIESGSNDPMAVFLTVTLIAILANVGAELSASFMLISFIKQFGLGVLLGLGGGWLLWKLVNVSKLAEGLYSILVLSGGLMIYATSNKLGGSGILSIYLVGLFLGNKPTRGRHAILNVLDGMTWVSQIGMFLVLGLLLTPSDLLDIWLPGLALAFGMILFARPLAVWLSLLPFKSFGSRDRWFISWVGLRGAVPIILAVFPMMAGLPGAQLYFNLAFFVVIVSLLVQGASLTTAARLAKVELPPKPLPISRSGVEIYPKSEWEVFVYCLSESKWCIGEPLKRLAMPDGTRIAAVFRNNTLLHPSGSTCLEAGDILCVLGQEKSLEALSNLFSQAPETDEVSRFFGDFFIDTEVKLADLAPIYGLTLDDETGAMTVADLVALELGAHPVLGDQFLWQSLHWVVAGLYEGKVTNVGIRLPADA.

Transmembrane regions (helical) follow at residues 6-26, 34-54, 58-78, 87-107, 109-129, 173-193, 196-216, 219-239, 242-262, 271-291, 299-319, 335-355, and 359-379; these read INSF…LSPM, ILLI…GGIL, YSTA…DGGM, VALW…TSIT, VMAA…GAIV, IAIL…ISFI, FGLG…LVNV, LAEG…YATS, LGGS…NKPT, VLDG…GLLL, IWLP…PLAV, WFIS…VFPM, and LPGA…SLLV. The region spanning 405 to 486 is the RCK C-terminal domain; that stretch reads SGVEIYPKSE…LEALSNLFSQ (82 aa).

Belongs to the monovalent cation:proton antiporter 1 (CPA1) transporter (TC 2.A.36) family. NhaP2 subfamily.

The protein resides in the cell inner membrane. The catalysed reaction is K(+)(in) + H(+)(out) = K(+)(out) + H(+)(in). In terms of biological role, k(+)/H(+) antiporter that extrudes potassium in exchange for external protons and maintains the internal concentration of potassium under toxic levels. This is K(+)/H(+) antiporter NhaP2 from Shewanella oneidensis (strain ATCC 700550 / JCM 31522 / CIP 106686 / LMG 19005 / NCIMB 14063 / MR-1).